A 230-amino-acid polypeptide reads, in one-letter code: Metaxin-2 homolog (230 aa).

The protein belongs to the metaxin family. In terms of assembly, associates with the mitochondrial contact site and cristae organizing system (MICOS) complex (also known as MINOS or MitOS complex).

It localises to the mitochondrion outer membrane. In terms of biological role, involved in transport of proteins into the mitochondrion. This chain is Metaxin-2 homolog (mtx-2), found in Caenorhabditis elegans.